A 175-amino-acid polypeptide reads, in one-letter code: ADP-ribosylation factor 6 (175 aa).

Gly-2 carries N-myristoyl glycine lipidation. The N6-myristoyl lysine moiety is linked to residue Lys-3. Residues Ala-23–Thr-28, Thr-41–Thr-44, Asp-63–Gln-67, Asn-122–Asp-125, and Cys-155–Ala-156 contribute to the GTP site.

It belongs to the small GTPase superfamily. Arf family. As to quaternary structure, interacts (when activated) with GGA1, GGA2 and GGA3; the interaction is required for proper subcellular location of GGA1, GGA2 and GGA3. Interacts with PIP5K1C. Interacts with USP6 (via Rab-GAP TBC domain). Interacts with RAB11FIP3 and RAB11FIP4. Interacts with HERC1. Interacts with ARHGAP21. Interacts with ASAP3; the interaction is stabilized by calcium ions. Interacts with NCS1/FREQ at the plasma membrane. Interacts with TBC1D24. Interacts with ECPAS. Interacts with MICALL1. Interacts with SPAG9 homodimers, forming heterotetramers. Interacts with CYTH3. Interacts with ASAP2. Interacts with UACA. Interacts with KIF23, forming heterodimers and heterotetramers. Interacts with C9orf72. Interacts (GTP-bound form) with TJAP1/PILT. Interacts with PRKAA2. Interacts with CD36 (when palmitoylated); this interaction mediates CD36 transport from the Golgi to the plasma membrane. Interacts with APBB1. In terms of assembly, (Microbial infection) Interacts with the V.cholerae enterotoxin subunit A1; this causes a conformation change so that the toxin can bind NAD and catalyze the ADP-ribosylation of Gs alpha. (Microbial infection) Interacts with EspG from enteropathogenic E.coli. As to quaternary structure, (Microbial infection) Identified in a complex with RAB1A and EspG from enteropathogenic E.coli. In terms of assembly, (Microbial infection) Interacts with human enterovirus 71 protein VP1. Post-translationally, GTP-bound form is myristoylated on Lys-3 by NMT1 and NMT2, allowing ARF6 to remain on membranes during the GTPase cycle, thereby promoting its activity. GDP-bound inactive form is demyristoylated on Lys-3 by SIRT2 at early endosomes or endocytic recycling compartment to allow its efficient activation by a guanine exchange factor (GEF) after GDP release. Ubiquitous, with higher levels in heart, substantia nigra, and kidney.

It localises to the cytoplasm. Its subcellular location is the cytosol. The protein localises to the cell membrane. It is found in the endosome membrane. The protein resides in the recycling endosome membrane. It localises to the cell projection. Its subcellular location is the filopodium membrane. The protein localises to the ruffle. It is found in the cleavage furrow. The protein resides in the midbody. It localises to the midbody ring. Its subcellular location is the early endosome membrane. The protein localises to the golgi apparatus. It is found in the trans-Golgi network membrane. It carries out the reaction GTP + H2O = GDP + phosphate + H(+). Its activity is regulated as follows. Activation is generally mediated by a guanine exchange factor (GEF), while inactivation through hydrolysis of bound GTP is catalyzed by a GTPase activating protein (GAP). Activated by ASAP3. Inactivated by ACAP1 and ACAP2. Activated by NGF via NTRK1. Activated by PRKAA2 through its C-terminal regulatory domain. GTP-binding protein involved in protein trafficking that regulates endocytic recycling and cytoskeleton remodeling. GTP-bound form plays an important role in the transport of multiple palmitoylated proteins form the Golgi to the plasma membrane. Required for normal completion of mitotic cytokinesis. Plays a role in the reorganization of the actin cytoskeleton and the formation of stress fibers. Involved in the regulation of dendritic spine development, contributing to the regulation of dendritic branching and filopodia extension. Potentiates the neurite outgrowth in primary neurons by interacting with the molecular adapter APBB1. Plays an important role in membrane trafficking, during junctional remodeling and epithelial polarization. Regulates surface levels of adherens junction proteins such as CDH1. Required for NTRK1 sorting to the recycling pathway from early endosomes. Its function is as follows. (Microbial infection) Functions as an allosteric activator of the cholera toxin catalytic subunit, an ADP-ribosyltransferase. Functionally, (Microbial infection) Plays a key role in the endocytosis of enterovirus 71 and thus viral entry into brain microvascular endothelial cells. This chain is ADP-ribosylation factor 6, found in Homo sapiens (Human).